A 473-amino-acid chain; its full sequence is GTPase Der (473 aa).

2 consecutive EngA-type G domains span residues 3–167 (LTIA…GKDK) and 204–379 (IRIA…RIWN). Residues 9 to 16 (GRPNVGKS), 56 to 60 (DTAGL), 119 to 122 (NKSE), 210 to 217 (GRPNTGKS), 257 to 261 (DTAGL), and 322 to 325 (NKWD) contribute to the GTP site. A KH-like domain is found at 380–464 (RRISTGKLNR…PIRLSLRTSD (85 aa)).

Belongs to the TRAFAC class TrmE-Era-EngA-EngB-Septin-like GTPase superfamily. EngA (Der) GTPase family. As to quaternary structure, associates with the 50S ribosomal subunit.

GTPase that plays an essential role in the late steps of ribosome biogenesis. This chain is GTPase Der, found in Bartonella bacilliformis (strain ATCC 35685 / KC583 / Herrer 020/F12,63).